The chain runs to 284 residues: Tryptophan 2,3-dioxygenase (284 aa).

Substrate contacts are provided by residues 51-55 (FIIQH), Tyr113, and Arg117. Heme is bound at residue His240. Residue Thr254 coordinates substrate.

Belongs to the tryptophan 2,3-dioxygenase family. As to quaternary structure, homotetramer. Heme serves as cofactor.

The enzyme catalyses L-tryptophan + O2 = N-formyl-L-kynurenine. It functions in the pathway amino-acid degradation; L-tryptophan degradation via kynurenine pathway; L-kynurenine from L-tryptophan: step 1/2. Functionally, heme-dependent dioxygenase that catalyzes the oxidative cleavage of the L-tryptophan (L-Trp) pyrrole ring and converts L-tryptophan to N-formyl-L-kynurenine. Catalyzes the oxidative cleavage of the indole moiety. This is Tryptophan 2,3-dioxygenase from Rhodococcus jostii (strain RHA1).